The following is a 127-amino-acid chain: Large ribosomal subunit protein uL24B (127 aa).

This sequence belongs to the universal ribosomal protein uL24 family. Component of the large ribosomal subunit (LSU). Mature yeast ribosomes consist of a small (40S) and a large (60S) subunit. The 40S small subunit contains 1 molecule of ribosomal RNA (18S rRNA) and 33 different proteins (encoded by 57 genes). The large 60S subunit contains 3 rRNA molecules (25S, 5.8S and 5S rRNA) and 46 different proteins (encoded by 81 genes).

It localises to the cytoplasm. Its function is as follows. Component of the ribosome, a large ribonucleoprotein complex responsible for the synthesis of proteins in the cell. The small ribosomal subunit (SSU) binds messenger RNAs (mRNAs) and translates the encoded message by selecting cognate aminoacyl-transfer RNA (tRNA) molecules. The large subunit (LSU) contains the ribosomal catalytic site termed the peptidyl transferase center (PTC), which catalyzes the formation of peptide bonds, thereby polymerizing the amino acids delivered by tRNAs into a polypeptide chain. The nascent polypeptides leave the ribosome through a tunnel in the LSU and interact with protein factors that function in enzymatic processing, targeting, and the membrane insertion of nascent chains at the exit of the ribosomal tunnel. The chain is Large ribosomal subunit protein uL24B from Saccharomyces cerevisiae (strain ATCC 204508 / S288c) (Baker's yeast).